A 141-amino-acid chain; its full sequence is Large ribosomal subunit protein uL11 (141 aa).

The protein belongs to the universal ribosomal protein uL11 family. As to quaternary structure, part of the ribosomal stalk of the 50S ribosomal subunit. Interacts with L10 and the large rRNA to form the base of the stalk. L10 forms an elongated spine to which L12 dimers bind in a sequential fashion forming a multimeric L10(L12)X complex. One or more lysine residues are methylated.

In terms of biological role, forms part of the ribosomal stalk which helps the ribosome interact with GTP-bound translation factors. This chain is Large ribosomal subunit protein uL11, found in Prochlorococcus marinus (strain NATL1A).